The chain runs to 446 residues: Glucose transporter GlcP (446 aa).

At 1 to 6 the chain is on the cytoplasmic side; sequence MKANKY. A helical membrane pass occupies residues 7-31; that stretch reads LIFILGALGGLLYGYDNGVISGALL. At 32–38 the chain is on the extracellular side; the sequence is FIHKDIP. The chain crosses the membrane as a helical span at residues 39–64; that stretch reads LNSTTEGIVVSSMLIGAIVGAGSSGP. Residues 65–70 lie on the Cytoplasmic side of the membrane; the sequence is LADKLG. A helical membrane pass occupies residues 71–90; it reads RRRLVMLIAIVFIIGALILA. The Extracellular segment spans residues 91–94; that stretch reads ASTN. Residues 95–122 traverse the membrane as a helical segment; the sequence is LALLIIGRLIIGLAVGGSMSTVPVYLSE. At 123-129 the chain is on the cytoplasmic side; the sequence is MAPTEYR. Residues 130 to 152 form a helical membrane-spanning segment; it reads GSLGSLNQLMITIGILAAYLVNY. The Extracellular segment spans residues 153-154; it reads AF. Residues 155–180 form a helical membrane-spanning segment; the sequence is ADIEGWRWMLGLAVVPSVILLVGIYF. At 181 to 234 the chain is on the cytoplasmic side; the sequence is MPESPRWLLENRNEEAARQVMKITYDDSEIDKELKEMKEINAISESTWTVIKSP. A helical transmembrane segment spans residues 235–269; it reads WLGRILIVGCIFAIFQQFIGINAVIFYSSSIFAKA. Residues 270-272 lie on the Extracellular side of the membrane; the sequence is GLG. The helical transmembrane segment at 273–295 threads the bilayer; it reads EAASILGSVGIGTINVLVTIVAI. Over 296–303 the chain is Cytoplasmic; the sequence is FVVDKIDR. A helical transmembrane segment spans residues 304–324; it reads KKLLVGGNIGMIASLLIMAIL. Residues 325-329 are Extracellular-facing; that stretch reads IWTIG. The chain crosses the membrane as a helical span at residues 330 to 363; it reads IASSAWIIIVCLSLFIVFFGISWGPVLWVMLPEL. Residues 364-370 lie on the Cytoplasmic side of the membrane; sequence FPMRARG. The chain crosses the membrane as a helical span at residues 371–399; the sequence is AATGISALVLNIGTLIVSLFFPILSDALS. The Extracellular segment spans residues 400-401; sequence TE. A helical transmembrane segment spans residues 402 to 420; sequence WVFLIFAFIGVLAMIFVIK. The Cytoplasmic portion of the chain corresponds to 421–446; that stretch reads FLPETRGRSLEEIEYELRERTGARTE.

The protein belongs to the major facilitator superfamily. Sugar transporter (TC 2.A.1.1) family.

Its subcellular location is the cell membrane. Its activity is regulated as follows. Inhibited by carbonyl cyanide m-chlorophenylhydrazone (CCCP) and by the human glucose transport inhibitors cytochalasin B, phloretin, and forskolin. Functionally, transporter highly specific for glucose uptake. In Staphylococcus epidermidis (strain ATCC 12228 / FDA PCI 1200), this protein is Glucose transporter GlcP.